The primary structure comprises 496 residues: MAGFSLYCFKNPRILFTLPSESPLFVLGSDKCSPATRRPSRKTRGFVVTYAHSNPKIINPKKKSRYGQTLSPYDSDEDDDDDDDDDDDDWLLNDDFAEVTEYEKKKPKSHKQTIAKKSVKKGIVKPEESETDEDDLDLGISPNATSEKKKESWRLDGRGKMSSRKYVEKLYPRLAEEIDIDPKCVPLLDYLSTFGLKESHFVQMYERHMPSLQINVFSAQERLDYLLSVGVKHRDIKRMLLRQPQILQYTVENNLKAHISFLMGLGIPNSKIGQIVAATPSLFSYSVENSLRPTIRYLIEEVGIKETDVGKVVQLSPQILVQRLDITWNTRYMFLSKELGAPRDSVVKMVKKHPQLLHYSIDDGFLPRINFLRSIGMCNSDILKVLTSLTQVLSLSLEDNLKPKYMYLVNELNNEVHILTKYPMYLSLSLDQRIRPRHRFLVELKKVRKGPFPLSSLVPNDESFCQQWAGTSVDTYLAFRQRLLLKEFANKYDKRG.

A chloroplast-targeting transit peptide spans 1-44; sequence MAGFSLYCFKNPRILFTLPSESPLFVLGSDKCSPATRRPSRKTR. Disordered stretches follow at residues 57–90 and 102–155; these read IINP…DDDW and YEKK…SWRL. Residues 74–90 are compositionally biased toward acidic residues; it reads DSDEDDDDDDDDDDDDW. Basic residues predominate over residues 105–123; it reads KKPKSHKQTIAKKSVKKGI. Positions 146 to 155 are enriched in basic and acidic residues; it reads SEKKKESWRL.

Belongs to the mTERF family.

The protein resides in the plastid. It localises to the chloroplast. Transcription termination factor required for processing and steady-state levels of plastid transcripts. May play a role in response to abiotic stresses. In Arabidopsis thaliana (Mouse-ear cress), this protein is Transcription termination factor MTERF9, chloroplastic.